The following is a 142-amino-acid chain: Large ribosomal subunit protein uL11 (142 aa).

This sequence belongs to the universal ribosomal protein uL11 family. As to quaternary structure, part of the ribosomal stalk of the 50S ribosomal subunit. Interacts with L10 and the large rRNA to form the base of the stalk. L10 forms an elongated spine to which L12 dimers bind in a sequential fashion forming a multimeric L10(L12)X complex. Post-translationally, one or more lysine residues are methylated.

Functionally, forms part of the ribosomal stalk which helps the ribosome interact with GTP-bound translation factors. This is Large ribosomal subunit protein uL11 from Baumannia cicadellinicola subsp. Homalodisca coagulata.